The chain runs to 514 residues: Cobyric acid synthase (514 aa).

The GATase cobBQ-type domain occupies 263–457; sequence ALDVAVIRLP…LHGIFDNDPL (195 aa). Catalysis depends on Cys-344, which acts as the Nucleophile. His-449 is a catalytic residue.

This sequence belongs to the CobB/CobQ family. CobQ subfamily.

The protein operates within cofactor biosynthesis; adenosylcobalamin biosynthesis. Its function is as follows. Catalyzes amidations at positions B, D, E, and G on adenosylcobyrinic A,C-diamide. NH(2) groups are provided by glutamine, and one molecule of ATP is hydrogenolyzed for each amidation. The polypeptide is Cobyric acid synthase (Desulfitobacterium hafniense (strain DSM 10664 / DCB-2)).